A 1801-amino-acid chain; its full sequence is Focadhesin (1801 aa).

N6-acetyllysine is present on K819.

As to quaternary structure, interacts with VCL. As to expression, ubiquitous. High expression in brain followed by testis, muscle, pancreas, heart, ovary, small intestine, placenta, prostate, thymus, kidney, colon, liver, lung, spleen and leukocytes. Expression is reduced in most glioblastomas and all glioblastoma cell lines.

The protein localises to the cell junction. It localises to the focal adhesion. Its subcellular location is the cytoplasm. The protein resides in the cytosol. In terms of biological role, required for the maintenance of SKIC2 and SKIC3 proteostatic levels in the liver. May be involved in the regulation of RNA degradation by the exosome complex. Potential tumor suppressor in gliomas. In Homo sapiens (Human), this protein is Focadhesin.